We begin with the raw amino-acid sequence, 130 residues long: MAKRVKRAGRKREKKHVERGIAHIHSTFNNTIVTITDPAGNTISWASAGTIGFKGSRKSTPFAAQMAAESAAKSAMEHGMKTVDVYVKGPGAGREAAIRALQAAGLEVSLIKDVTPIPHNGCRPPKRRRV.

The protein belongs to the universal ribosomal protein uS11 family. Part of the 30S ribosomal subunit. Interacts with proteins S7 and S18. Binds to IF-3.

Functionally, located on the platform of the 30S subunit, it bridges several disparate RNA helices of the 16S rRNA. Forms part of the Shine-Dalgarno cleft in the 70S ribosome. This is Small ribosomal subunit protein uS11 from Thermoanaerobacter sp. (strain X514).